The following is a 397-amino-acid chain: Acetate kinase (397 aa).

Residue Asn7 coordinates Mg(2+). Lys14 contacts ATP. Arg90 contacts substrate. The Proton donor/acceptor role is filled by Asp147. Residues 207–211 (HLGNG), 282–284 (DFR), and 330–334 (GLGEN) each bind ATP. Glu383 provides a ligand contact to Mg(2+).

It belongs to the acetokinase family. As to quaternary structure, homodimer. Mg(2+) serves as cofactor. Mn(2+) is required as a cofactor.

It is found in the cytoplasm. The enzyme catalyses acetate + ATP = acetyl phosphate + ADP. The protein operates within metabolic intermediate biosynthesis; acetyl-CoA biosynthesis; acetyl-CoA from acetate: step 1/2. In terms of biological role, catalyzes the formation of acetyl phosphate from acetate and ATP. Can also catalyze the reverse reaction. The polypeptide is Acetate kinase (Clostridium botulinum (strain ATCC 19397 / Type A)).